A 189-amino-acid chain; its full sequence is Large ribosomal subunit protein uL6 (189 aa).

It belongs to the universal ribosomal protein uL6 family. As to quaternary structure, part of the 50S ribosomal subunit.

Its function is as follows. This protein binds to the 23S rRNA, and is important in its secondary structure. It is located near the subunit interface in the base of the L7/L12 stalk, and near the tRNA binding site of the peptidyltransferase center. This chain is Large ribosomal subunit protein uL6, found in Bacteroides fragilis (strain ATCC 25285 / DSM 2151 / CCUG 4856 / JCM 11019 / LMG 10263 / NCTC 9343 / Onslow / VPI 2553 / EN-2).